We begin with the raw amino-acid sequence, 800 residues long: DNA topoisomerase 4 subunit A (800 aa).

Residues 31–495 (LPDVRDGLKP…EIEEIKIDKE (465 aa)) form the Topo IIA-type catalytic domain. The active-site O-(5'-phospho-DNA)-tyrosine intermediate is Tyr-119.

Belongs to the type II topoisomerase GyrA/ParC subunit family. ParC type 2 subfamily. In terms of assembly, heterotetramer composed of ParC and ParE.

Its subcellular location is the cell membrane. It catalyses the reaction ATP-dependent breakage, passage and rejoining of double-stranded DNA.. Topoisomerase IV is essential for chromosome segregation. It relaxes supercoiled DNA. Performs the decatenation events required during the replication of a circular DNA molecule. The polypeptide is DNA topoisomerase 4 subunit A (Staphylococcus aureus).